Consider the following 469-residue polypeptide: Uronate isomerase (469 aa).

The protein belongs to the metallo-dependent hydrolases superfamily. Uronate isomerase family.

It carries out the reaction D-glucuronate = D-fructuronate. The enzyme catalyses aldehydo-D-galacturonate = keto-D-tagaturonate. It participates in carbohydrate metabolism; pentose and glucuronate interconversion. The chain is Uronate isomerase from Edwardsiella ictaluri (strain 93-146).